Consider the following 464-residue polypeptide: Protein VAPYRIN-LIKE (464 aa).

Residues 3-124 form the MSP domain; that stretch reads RLVKTEFNEV…RDAVITVILV (122 aa). ANK repeat units lie at residues 153 to 182, 186 to 215, 217 to 246, 252 to 281, 285 to 314, 318 to 347, 349 to 368, 372 to 401, and 405 to 435; these read NLTN…DVNF, NGKS…RIND, VDFV…ELDV, EMMT…NANA, RRWT…VKYA, NGKT…LLQA, RVDD…EVNR, NGWT…EVDS, and AGYT…QTNL.

Expressed in roots.

The protein localises to the cytoplasm. It is found in the nucleus. Its subcellular location is the cell membrane. In terms of biological role, may be involved in arbuscular mycorrhizal (AM) symbiosis with AM fungi and in nitrogen-fixing rhizobial bacteria symbiosis leading to the formation of root nodules. This chain is Protein VAPYRIN-LIKE, found in Medicago truncatula (Barrel medic).